The sequence spans 221 residues: Bcl-2-related ovarian killer protein homolog A (221 aa).

Residues K32–H44 carry the BH4 motif. The BH3 signature appears at V64–P80. The short motif at E110 to G140 is the BH1 element. Residues W173–V187 carry the BH2 motif. Residues W198–L218 traverse the membrane as a helical segment.

Belongs to the Bcl-2 family. In terms of tissue distribution, strongest expression in ovary and eye, weaker expression in gut, kidney and brain. Little expression in liver or heart.

Its subcellular location is the membrane. In terms of biological role, may play a role in apoptosis. Does not appear to show pro-apoptotic activity when expressed ectopically in early embryos. This chain is Bcl-2-related ovarian killer protein homolog A, found in Danio rerio (Zebrafish).